Here is a 380-residue protein sequence, read N- to C-terminus: Succinyl-diaminopimelate desuccinylase (380 aa).

Residue H70 participates in Zn(2+) binding. The active site involves D72. Residue D104 coordinates Zn(2+). Residue E138 is the Proton acceptor of the active site. The Zn(2+) site is built by E139, E167, and H353.

This sequence belongs to the peptidase M20A family. DapE subfamily. As to quaternary structure, homodimer. The cofactor is Zn(2+). It depends on Co(2+) as a cofactor.

It carries out the reaction N-succinyl-(2S,6S)-2,6-diaminopimelate + H2O = (2S,6S)-2,6-diaminopimelate + succinate. The protein operates within amino-acid biosynthesis; L-lysine biosynthesis via DAP pathway; LL-2,6-diaminopimelate from (S)-tetrahydrodipicolinate (succinylase route): step 3/3. Catalyzes the hydrolysis of N-succinyl-L,L-diaminopimelic acid (SDAP), forming succinate and LL-2,6-diaminopimelate (DAP), an intermediate involved in the bacterial biosynthesis of lysine and meso-diaminopimelic acid, an essential component of bacterial cell walls. This Ectopseudomonas mendocina (strain ymp) (Pseudomonas mendocina) protein is Succinyl-diaminopimelate desuccinylase.